The chain runs to 363 residues: MNRHHLQDHFLEIDKKNCCVFRDDFIVKVLPPVLGLEFIFGLLGNGLALWIFCFHLKSWKSSRIFLFNLAVADFLLIICLPFLMDNYVRRWDWKFGDIPCRLMLFMLAMNRQGSIIFLTVVAVDRYFRVVHPHHALNKISNRTAAIISCLLWGITIGLTVHLLKKKMPIQNGGANLCSSFSICHTFQWHEAMFLLEFFLPLGIILFCSARIIWSLRQRQMDRHAKIKRAITFIMVVAIVFVICFLPSVVVRIRIFWLLHTSGTQNCEVYRSVDLAFFITLSFTYMNSMLDPVVYYFSSPSFPNFFSTLINRCLQRKMTGEPDNNRSTSVELTGDPNKTRGAPEALMANSGEPWSPSYLGPTSP.

Topologically, residues 1-33 are extracellular; that stretch reads MNRHHLQDHFLEIDKKNCCVFRDDFIVKVLPPV. A helical transmembrane segment spans residues 34–54; the sequence is LGLEFIFGLLGNGLALWIFCF. Residues 55–63 are Cytoplasmic-facing; the sequence is HLKSWKSSR. A helical membrane pass occupies residues 64–84; the sequence is IFLFNLAVADFLLIICLPFLM. Topologically, residues 85–102 are extracellular; the sequence is DNYVRRWDWKFGDIPCRL. Residues Cys-100 and Cys-177 are joined by a disulfide bond. Residues 103–123 traverse the membrane as a helical segment; that stretch reads MLFMLAMNRQGSIIFLTVVAV. The Cytoplasmic portion of the chain corresponds to 124 to 142; the sequence is DRYFRVVHPHHALNKISNR. A helical transmembrane segment spans residues 143–163; the sequence is TAAIISCLLWGITIGLTVHLL. The Extracellular portion of the chain corresponds to 164-192; that stretch reads KKKMPIQNGGANLCSSFSICHTFQWHEAM. The helical transmembrane segment at 193–213 threads the bilayer; it reads FLLEFFLPLGIILFCSARIIW. At 214–229 the chain is on the cytoplasmic side; the sequence is SLRQRQMDRHAKIKRA. The helical transmembrane segment at 230 to 250 threads the bilayer; it reads ITFIMVVAIVFVICFLPSVVV. Residues 251–273 are Extracellular-facing; the sequence is RIRIFWLLHTSGTQNCEVYRSVD. The chain crosses the membrane as a helical span at residues 274-294; the sequence is LAFFITLSFTYMNSMLDPVVY. Residues 295-363 lie on the Cytoplasmic side of the membrane; that stretch reads YFSSPSFPNF…SPSYLGPTSP (69 aa). Residues 319–363 are disordered; the sequence is GEPDNNRSTSVELTGDPNKTRGAPEALMANSGEPWSPSYLGPTSP. Position 328 is a phosphoserine (Ser-328).

Belongs to the G-protein coupled receptor 1 family. In terms of tissue distribution, expression largely restricted to adipose tissue and spleen. Expressed on mature neutrophils but not on immature neutrophils or eosinophils.

It is found in the cell membrane. Functionally, acts as a high affinity receptor for both nicotinic acid (also known as niacin) and (D)-beta-hydroxybutyrate and mediates increased adiponectin secretion and decreased lipolysis through G(i)-protein-mediated inhibition of adenylyl cyclase. This pharmacological effect requires nicotinic acid doses that are much higher than those provided by a normal diet. Mediates nicotinic acid-induced apoptosis in mature neutrophils. Receptor activation by nicotinic acid results in reduced cAMP levels which may affect activity of cAMP-dependent protein kinase A and phosphorylation of target proteins, leading to neutrophil apoptosis. The rank order of potency for the displacement of nicotinic acid binding is 5-methyl pyrazole-3-carboxylic acid = pyridine-3-acetic acid &gt; acifran &gt; 5-methyl nicotinic acid = acipimox &gt;&gt; nicotinuric acid = nicotinamide. In Homo sapiens (Human), this protein is Hydroxycarboxylic acid receptor 2 (HCAR2).